Reading from the N-terminus, the 275-residue chain is Large ribosomal subunit protein uL2 (275 aa).

Over residues 36–49 (TQSSTAGRNNNGRI) the composition is skewed to polar residues. Disordered stretches follow at residues 36-59 (TQSS…GGHK) and 224-275 (AMNP…RHKR). The span at 50–59 (TTRHKGGGHK) shows a compositional bias: basic residues.

Belongs to the universal ribosomal protein uL2 family. In terms of assembly, part of the 50S ribosomal subunit. Forms a bridge to the 30S subunit in the 70S ribosome.

One of the primary rRNA binding proteins. Required for association of the 30S and 50S subunits to form the 70S ribosome, for tRNA binding and peptide bond formation. It has been suggested to have peptidyltransferase activity; this is somewhat controversial. Makes several contacts with the 16S rRNA in the 70S ribosome. This chain is Large ribosomal subunit protein uL2, found in Burkholderia vietnamiensis (strain G4 / LMG 22486) (Burkholderia cepacia (strain R1808)).